A 646-amino-acid chain; its full sequence is Serine/threonine-protein kinase max-2 (646 aa).

Residues 19–40 are disordered; the sequence is FSPSDKDKDRDDEMKPSSSAMD. Basic and acidic residues predominate over residues 22–33; the sequence is SDKDKDRDDEMK. Residues 41-54 form the CRIB domain; that stretch reads ISQPYNTVHRVHVG. The disordered stretch occupies residues 136 to 345; it reads LQCSNGSATS…PPPPEEPPVR (210 aa). Composition is skewed to low complexity over residues 142 to 157 and 167 to 180; these read SATS…SSSA and LSTA…LSLS. Over residues 196–205 the composition is skewed to polar residues; it reads SAPQLKTFTG. Positions 214-223 are enriched in pro residues; that stretch reads SPFPPQPPVL. Residues 229 to 245 show a composition bias toward low complexity; it reads TASAVATTTTNPTTSNG. Pro residues predominate over residues 246-262; sequence APPPVPGSKGPPVPPKP. Low complexity-rich tracts occupy residues 273-307 and 323-334; these read SSGC…DGDV and KNGNTTTNKTTV. Residues 376 to 627 enclose the Protein kinase domain; the sequence is YEMKKQIGVG…TTELLAHPFL (252 aa). Residues 382–390 and K405 each bind ATP; that span reads IGVGASGTV. Residue D496 is the Proton acceptor of the active site.

It belongs to the protein kinase superfamily. STE Ser/Thr protein kinase family. STE20 subfamily. In terms of assembly, interacts with mlk-1; the interaction is independent of max-2 and mlk-1 kinase activities. Interacts with mig-2 (GTP-bound form). It depends on Mg(2+) as a cofactor.

Its subcellular location is the perikaryon. The protein localises to the cell projection. It is found in the dendrite. It localises to the cytoplasm. The catalysed reaction is L-seryl-[protein] + ATP = O-phospho-L-seryl-[protein] + ADP + H(+). It carries out the reaction L-threonyl-[protein] + ATP = O-phospho-L-threonyl-[protein] + ADP + H(+). Its function is as follows. Serine/threonine-protein kinase, which phosphorylates mlk-1. Involved in the stress response to heavy metals by activating the mlk-1/mek-1/kgb-1 pathway. In ventral cord commissural motoneurons, required for dorsal axon guidance downstream of unc-6/netrin repulsion receptor unc-5 and probably of Rho GTPases ced-10 and mig-2. Plays a redundant role with mig-10 in orientating axonal growth of HSN neurons. Plays a redundant role with pak-1 in P neuroblast migration and in distal tip cell (DTC)-mediated guidance of gonad elongation probably downstream of Rho GTPases. In association with pak-2, plays a role in embryogenesis. In association with pak-1, may be involved in spermatogenesis. In Caenorhabditis elegans, this protein is Serine/threonine-protein kinase max-2.